A 462-amino-acid chain; its full sequence is Argininosuccinate lyase (462 aa).

The protein belongs to the lyase 1 family. Argininosuccinate lyase subfamily.

It localises to the cytoplasm. The catalysed reaction is 2-(N(omega)-L-arginino)succinate = fumarate + L-arginine. Its pathway is amino-acid biosynthesis; L-arginine biosynthesis; L-arginine from L-ornithine and carbamoyl phosphate: step 3/3. The protein is Argininosuccinate lyase of Hydrogenovibrio crunogenus (strain DSM 25203 / XCL-2) (Thiomicrospira crunogena).